The primary structure comprises 389 residues: Chalcone synthase 8 (389 aa).

Cysteine 164 is a catalytic residue.

It belongs to the thiolase-like superfamily. Chalcone/stilbene synthases family.

It carries out the reaction (E)-4-coumaroyl-CoA + 3 malonyl-CoA + 3 H(+) = 2',4,4',6'-tetrahydroxychalcone + 3 CO2 + 4 CoA. The protein operates within secondary metabolite biosynthesis; flavonoid biosynthesis. The primary product of this enzyme is 4,2',4',6'-tetrahydroxychalcone (also termed naringenin-chalcone or chalcone) which can under specific conditions spontaneously isomerize into naringenin. This Medicago sativa (Alfalfa) protein is Chalcone synthase 8 (CHS8).